Here is a 593-residue protein sequence, read N- to C-terminus: Alanine--tRNA ligase (593 aa).

Zn(2+) contacts are provided by H456, H460, C558, and H562.

This sequence belongs to the class-II aminoacyl-tRNA synthetase family. Zn(2+) serves as cofactor.

Its subcellular location is the cytoplasm. The catalysed reaction is tRNA(Ala) + L-alanine + ATP = L-alanyl-tRNA(Ala) + AMP + diphosphate. Catalyzes the attachment of alanine to tRNA(Ala) in a two-step reaction: alanine is first activated by ATP to form Ala-AMP and then transferred to the acceptor end of tRNA(Ala). Also edits incorrectly charged Ser-tRNA(Ala) and Gly-tRNA(Ala) via its editing domain. The polypeptide is Alanine--tRNA ligase (alaS) (Borrelia hermsii (strain HS1 / DAH)).